A 247-amino-acid chain; its full sequence is Mast cell protease 8 (247 aa).

A signal peptide spans M1–G19. E20 is a propeptide (activation peptide). Residues I21 to K242 enclose the Peptidase S1 domain. N-linked (GlcNAc...) asparagine glycosylation is present at N41. C49 and C65 form a disulfide bridge. H64 functions as the Charge relay system in the catalytic mechanism. N-linked (GlcNAc...) asparagine glycans are attached at residues N71 and N101. D107 functions as the Charge relay system in the catalytic mechanism. Intrachain disulfides connect C141-C206 and C171-C185. N151 and N179 each carry an N-linked (GlcNAc...) asparagine glycan. S200 (charge relay system) is an active-site residue.

It belongs to the peptidase S1 family. Granzyme subfamily.

The protein localises to the secreted. It localises to the cytoplasmic granule. This chain is Mast cell protease 8 (Mcpt8), found in Mus musculus (Mouse).